Consider the following 205-residue polypeptide: Probable GTP-binding protein EngB (205 aa).

The region spanning Glu27–Ser201 is the EngB-type G domain. Residues Gly35–Ser42, Gly62–Leu66, Asp80–Gly83, Thr147–Asp150, and Phe180–Ala182 contribute to the GTP site. Mg(2+) contacts are provided by Ser42 and Thr64.

The protein belongs to the TRAFAC class TrmE-Era-EngA-EngB-Septin-like GTPase superfamily. EngB GTPase family. Mg(2+) is required as a cofactor.

In terms of biological role, necessary for normal cell division and for the maintenance of normal septation. The sequence is that of Probable GTP-binding protein EngB from Mannheimia succiniciproducens (strain KCTC 0769BP / MBEL55E).